The primary structure comprises 270 residues: Probable aquaporin NIP-type (270 aa).

A run of 2 helical transmembrane segments spans residues L45–V65 and V72–V92. Residues N101 to A103 carry the NPA 1 motif. 3 helical membrane-spanning segments follow: residues L121–F141, S160–T180, and V188–S208. Positions N213–A215 match the NPA 2 motif. Residues W231–I251 form a helical membrane-spanning segment.

It belongs to the MIP/aquaporin (TC 1.A.8) family. NIP (TC 1.A.8.12) subfamily. In terms of tissue distribution, pollen specific.

It is found in the membrane. Its function is as follows. Aquaporins facilitate the transport of water and small neutral solutes across cell membranes. The protein is Probable aquaporin NIP-type of Nicotiana alata (Winged tobacco).